We begin with the raw amino-acid sequence, 151 residues long: MGRMHAPGKGLSQSALPYRRSVPTWLKLASDDVKEQIYKLAKKGLTPSQIGVILRDSHGVAQVRFVTGNKILRILKSKGLAPDLPEDLYHLIKKAVAVRKHLERNRKDKDAKFRLILIESRIHRLARYYKTKRVLPPNWKYESSTASALVA.

Lys-27 is subject to N6-acetyllysine; alternate. Residue Lys-27 is modified to N6-succinyllysine; alternate. Residue Lys-27 forms a Glycyl lysine isopeptide (Lys-Gly) (interchain with G-Cter in ubiquitin) linkage. At Ser-30 the chain carries Phosphoserine. An N6-succinyllysine modification is found at Lys-34. Position 38 is a phosphotyrosine (Tyr-38). Lys-43 is covalently cross-linked (Glycyl lysine isopeptide (Lys-Gly) (interchain with G-Cter in SUMO2)).

Belongs to the universal ribosomal protein uS15 family. Component of the small ribosomal subunit. Part of the small subunit (SSU) processome, composed of more than 70 proteins and the RNA chaperone small nucleolar RNA (snoRNA) U3. Post-translationally, ubiquitinated at Lys-27 by RNF14 and RNF25 in response to ribosome collisions (ribosome stalling).

Its subcellular location is the cytoplasm. It is found in the nucleus. It localises to the nucleolus. In terms of biological role, component of the small ribosomal subunit. The ribosome is a large ribonucleoprotein complex responsible for the synthesis of proteins in the cell. Part of the small subunit (SSU) processome, first precursor of the small eukaryotic ribosomal subunit. During the assembly of the SSU processome in the nucleolus, many ribosome biogenesis factors, an RNA chaperone and ribosomal proteins associate with the nascent pre-rRNA and work in concert to generate RNA folding, modifications, rearrangements and cleavage as well as targeted degradation of pre-ribosomal RNA by the RNA exosome. The polypeptide is Small ribosomal subunit protein uS15 (RPS13) (Cricetulus griseus (Chinese hamster)).